The primary structure comprises 519 residues: 2,3-bisphosphoglycerate-independent phosphoglycerate mutase (519 aa).

Mn(2+) contacts are provided by Asp-18 and Ser-68. The active-site Phosphoserine intermediate is Ser-68. Substrate-binding positions include His-129, 159-160 (RD), Arg-191, Arg-197, 267-270 (RADR), and Lys-341. Mn(2+) is bound by residues Asp-408, His-412, Asp-449, His-450, and His-468.

The protein belongs to the BPG-independent phosphoglycerate mutase family. Monomer. It depends on Mn(2+) as a cofactor.

It catalyses the reaction (2R)-2-phosphoglycerate = (2R)-3-phosphoglycerate. Its pathway is carbohydrate degradation; glycolysis; pyruvate from D-glyceraldehyde 3-phosphate: step 3/5. Its function is as follows. Catalyzes the interconversion of 2-phosphoglycerate and 3-phosphoglycerate. The chain is 2,3-bisphosphoglycerate-independent phosphoglycerate mutase from Coxiella burnetii (strain Dugway 5J108-111).